We begin with the raw amino-acid sequence, 187 residues long: UPF0398 protein MW1336 (187 aa).

It belongs to the UPF0398 family.

The protein is UPF0398 protein MW1336 of Staphylococcus aureus (strain MW2).